The sequence spans 159 residues: Transcription antitermination protein NusB (159 aa).

This sequence belongs to the NusB family.

Involved in transcription antitermination. Required for transcription of ribosomal RNA (rRNA) genes. Binds specifically to the boxA antiterminator sequence of the ribosomal RNA (rrn) operons. The protein is Transcription antitermination protein NusB of Xanthomonas axonopodis pv. citri (strain 306).